A 133-amino-acid chain; its full sequence is Profilin-2 (133 aa).

This sequence belongs to the profilin family. In terms of assembly, occurs in many kinds of cells as a complex with monomeric actin in a 1:1 ratio.

The protein resides in the cytoplasm. Its subcellular location is the cytoskeleton. Its function is as follows. Binds to actin and affects the structure of the cytoskeleton. At high concentrations, profilin prevents the polymerization of actin, whereas it enhances it at low concentrations. By binding to PIP2, it inhibits the formation of IP3 and DG. The polypeptide is Profilin-2 (Artemisia vulgaris (Mugwort)).